The following is a 136-amino-acid chain: Large ribosomal subunit protein eL27 (136 aa).

A KOW domain is found at 5–40; it reads MKPGKVVMVLAGRYAGRKAVIVKNIDDGTADRPYSH.

This sequence belongs to the eukaryotic ribosomal protein eL27 family. Component of the large ribosomal subunit.

The protein resides in the cytoplasm. Its subcellular location is the cytosol. The protein localises to the rough endoplasmic reticulum. Functionally, component of the large ribosomal subunit. This Danio rerio (Zebrafish) protein is Large ribosomal subunit protein eL27 (rpl27).